The following is a 460-amino-acid chain: Diguanylate cyclase DosC (460 aa).

His98 contacts heme. The GGDEF domain maps to 325–458 (TPLSVLIIDV…GRNRVELWKA (134 aa)). Residue Asp333 participates in Mg(2+) binding. The substrate site is built by Asn341 and Asp350. Asp376 is a binding site for Mg(2+). The Proton acceptor role is filled by Asp376.

Heme serves as cofactor. Requires Mg(2+) as cofactor.

It carries out the reaction 2 GTP = 3',3'-c-di-GMP + 2 diphosphate. It functions in the pathway purine metabolism; 3',5'-cyclic di-GMP biosynthesis. In terms of biological role, globin-coupled heme-based oxygen sensor protein displaying diguanylate cyclase (DGC) activity in response to oxygen availability. Thus, catalyzes the synthesis of cyclic diguanylate (c-di-GMP) via the condensation of 2 GTP molecules. Cyclic-di-GMP is a second messenger which controls cell surface-associated traits in bacteria. The chain is Diguanylate cyclase DosC (dosC) from Escherichia coli O157:H7.